The sequence spans 106 residues: SH3 domain-binding glutamic acid-rich-like protein 2 (106 aa).

Residues 61-67 (QGNPLPP) carry the SH3-binding motif.

The protein belongs to the SH3BGR family.

The protein resides in the nucleus. This is SH3 domain-binding glutamic acid-rich-like protein 2 (sh3bgrl2) from Xenopus tropicalis (Western clawed frog).